We begin with the raw amino-acid sequence, 925 residues long: MQPSLIPSLLETAAARNGDGRVILYSQGNREDPRSITYRDLLETASKASVAVHNHQNYTPGAAVLLHFNNHLDNIVWFWAVLLAGCIPAITPAFSNNPVQRVANLEHLSSTLITDWCLTSQALLVEFAGQDAIEPVSVETLGWEKASPDSNTASVKAKPTDTALLLFTSGSTGKSKAVCLSHFQIVSAIAGKLSVVPLPEQSSFLNWVGLDHVAAIIEIHLQALYADLDQVHVPGSDVISDPIWFLDLMATHRVSRTFAPNFFLARIRDALVQNARSASPRQWDLSGLRYVASGGEANTTKTCDELSQLLKSFGAPLNVIVPGFGMTETCAGAIFNTNCPDYDKKHGLEYTSVGSCMPGIFMRVTNQQGDPLPPGEMGSLELAGPVVFRQYLNNPAATQESFTMDGWFKTGDCGTLDENGYLVLGGRAKETIIINGVKYSPHEIETAVEEHNIKGLSRSFTCCFSSLSPGAETEEIVLVYLPTYAPEDIPARAATADAISKVVLMSTGSRPHIIPLEQALLPKSTLGKLSRSKIKAAYERGEYRTHDSINRSLIARHRQATRASPKNDFEKGLLEIFLRSFKISEDEFDVQTPIFDVGIDSIELINLKRDIEQHLGFADATIPIIILLENTTVRELAAALDNLYRPKEYNPVVTLQAHGDKNPLWLVHPGAGEVLIFINLAKFITDRPVYALRARGFDEGEKPFDSIEDAVTSYYNGVKSKQPHGPYALAGYCYGSMLAFEVAKKLEENGDEVRFVGSFNLPPHIKMRMRELDWKECLLHLAYFLDLITQKRSRELAVELDGLDQDTILQAIIDEADKERYAQLSLSRPFLSRWADVAYELHRIAGDYDPDGRVASMDVFFSIPLAIAAASKSEWRNVHLSQWDDFTRSHVRFHDVPGEHYSMIGPEHVFAFQKILRSALAERGM.

An adenylation (A) domain region spans residues 11–434; the sequence is ETAAARNGDG…GGRAKETIII (424 aa). One can recognise a Carrier domain in the interval 564–644; it reads SPKNDFEKGL…ELAAALDNLY (81 aa). Ser601 bears the O-(pantetheine 4'-phosphoryl)serine mark. The segment at 663–923 is thioesterase (TE) domain; sequence PLWLVHPGAG…KILRSALAER (261 aa).

It belongs to the NRP synthetase family.

The protein resides in the cytoplasm. It catalyses the reaction 2 3-(4-hydroxyphenyl)pyruvate + AH2 + 2 ATP + O2 = aspulvinone E + A + 2 AMP + CO2 + 2 diphosphate + H2O + H(+). Its function is as follows. Nonribosomal peptide synthase; part of the gene cluster that mediates the biosynthesis of Asp-melanin, a pigment that confers resistance against UV light and hampers phagocytosis by soil amoeba. The nonribosomal peptide synthase melA converts 4-hydroxyphenylpyruvate (4-HPPA) to aspulvinone E. The tyrosinase tyrP then performs hydroxylations of both aromatic moieties of aspulvinone E. The product of tyrP is highly unstable, and, due to the high reactivity of methides and ortho-diquinones, the polymeric Asp-melanin forms spontaneously. In Aspergillus terreus (strain NIH 2624 / FGSC A1156), this protein is Aspulvinone E synthetase melA.